Consider the following 390-residue polypeptide: Neuromedin-B receptor (390 aa).

Residues 1–44 (MPPKSLSNLSQTAGVNQSGFFPGASERDFLPATDRTTAEFVIRC) lie on the Extracellular side of the membrane. N-linked (GlcNAc...) asparagine glycosylation is found at Asn-8 and Asn-16. A helical membrane pass occupies residues 45-65 (VIPSLYLLIITVGLLGNIVLV). The Cytoplasmic portion of the chain corresponds to 66–76 (KIFLTNSAMRS). A helical membrane pass occupies residues 77–97 (VPNIFISNLAAGDVLLLLTCV). Residues 98-117 (PVDASRYFLDEWMFGKVGCK) lie on the Extracellular side of the membrane. A disulfide bridge connects residues Cys-116 and Cys-198. The helical transmembrane segment at 118–138 (LIPVIQLTSVGVSVFTLTALS) threads the bilayer. Residues 139–155 (ADRYRAIVNPMDIQTSG) lie on the Cytoplasmic side of the membrane. A helical membrane pass occupies residues 156–176 (AVLWTCVKAGGIWVVSVLLAV). The Extracellular portion of the chain corresponds to 177–210 (PEAVFSEVARIDGLDNGSFTACIPYPQTDELHPK). The N-linked (GlcNAc...) asparagine glycan is linked to Asn-192. Residues 211–231 (IHSVLIFLVYFLIPLGIISVY) traverse the membrane as a helical segment. The Cytoplasmic portion of the chain corresponds to 232-266 (YYHIAKTLIKSAHNLPGEYNEHTKKQMETRKRLAK). Residues 267 to 287 (IVLVFVGCFVFCWFPNHILYM) form a helical membrane-spanning segment. Residues 288 to 305 (YRSFNYNEIDPSLGHMIV) are Extracellular-facing. A helical transmembrane segment spans residues 306-328 (TLVARVLSFCNSCVNPFALYLLS). The Cytoplasmic portion of the chain corresponds to 329–390 (ESFRKHFNNQ…GHSVKQEMAL (62 aa)). Cys-341 is lipidated: S-palmitoyl cysteine. Ser-352 carries the phosphoserine modification.

It belongs to the G-protein coupled receptor 1 family. In terms of tissue distribution, highly expressed in peripheral tissues where it is detected in the respiratory system, circulatory system, digestive system, urogenital system, lymphatic organs and endocrine system (at protein level). In the testis, expressed mainly in Leydig cells (at protein level).

Its subcellular location is the cell membrane. Receptor for neuromedin-B. Contributes to the maintenance of basal sigh rate through signaling in the pre-Botzinger complex, a cluster of several thousand neurons in the ventrolateral medulla responsible for inspiration during respiratory activity. Contributes to the induction of sneezing following exposure to chemical irritants or allergens which causes release of NMB by nasal sensory neurons and activation of NMBR-expressing neurons in the sneeze-evoking region of the brainstem. These in turn activate neurons of the caudal ventral respiratory group, giving rise to the sneezing response. Contributes to induction of acute itch, possibly through its activation on dorsal root ganglion neurons by the NMB peptide. Plays a role in the innate immune response to influenza A virus infection by enhancing interferon alpha expression and reducing expression of IL6. Plays a role in CSF1-induced proliferation of osteoclast precursors by contributing to the positive regulation of the expression of the CSF1 receptor CSF1R. This chain is Neuromedin-B receptor (NMBR), found in Sus scrofa (Pig).